A 342-amino-acid chain; its full sequence is MKKRIAIVLFNLGGPEDIEYVKPFLFNLFYDKAIINLPNPLRYVIAKIISIVRERKSQKIYSLIGRKSYLIQETEKQKLAITKKLKEILKEDFIIFISMRYSTPFAKEVICQIKEYNPSEIILLPLYPQFSSTTTGSSVKNFLQNIDIDIPIKTICCYPIEEDFIKAHVSIIKEKLYDKNFRILFSAHGLPKRIIKAGDPYSFQIKETVNKIVKELNIKDLDYKITYQSRVGPIEWLKPSTEYEIELAGKLKKDIIIVPISFVSEHVETLVELDIEYKFIADKYNIQYTRIPTLGTNKIFINSLTNILIRFINKTDTNLVMSSSSKRICPNKFTKCLCNLIN.

2 residues coordinate Fe cation: H188 and E268.

Belongs to the ferrochelatase family.

Its subcellular location is the cytoplasm. The enzyme catalyses heme b + 2 H(+) = protoporphyrin IX + Fe(2+). It functions in the pathway porphyrin-containing compound metabolism; protoheme biosynthesis; protoheme from protoporphyrin-IX: step 1/1. Functionally, catalyzes the ferrous insertion into protoporphyrin IX. In Rickettsia typhi (strain ATCC VR-144 / Wilmington), this protein is Ferrochelatase.